We begin with the raw amino-acid sequence, 114 residues long: TYRO protein tyrosine kinase-binding protein (114 aa).

A signal peptide spans 1-21 (MGALEPSWCLLFLPVLLTVGG). The Extracellular portion of the chain corresponds to 22 to 42 (LSPVQAQSDTFPRCDCSSVSP). A helical membrane pass occupies residues 43 to 63 (GVLAGIVLGDLVLTLLIALAV). Asp52 contacts Ca(2+). At 64-114 (YSLGRLVSRGQGTAEGTRKQHIAETESPYQELQGQRPEVYSDLNTQRQYYR) the chain is on the cytoplasmic side. A disordered region spans residues 74–107 (QGTAEGTRKQHIAETESPYQELQGQRPEVYSDLN). An ITAM domain is found at 81–109 (RKQHIAETESPYQELQGQRPEVYSDLNTQ). Phosphotyrosine is present on residues Tyr92 and Tyr103.

This sequence belongs to the TYROBP family. In terms of assembly, homodimer; disulfide-linked. Homotrimer; disulfide-linked. Homotetramer; disulfide-linked. Homotrimers and homotetramers form when low levels of partner receptors are available and are competitive with assembly with interacting receptors. They may represent alternative oligomerization states or may be intermediates in the receptor assembly process. Binding of a metal cation aids in homooligomerization through coordination of the metal ion by the subunits of the oligomer. Interacts with TREM1. Interacts with TREM2. Interacts with TREM3. Interacts with CLECSF5. Interacts with CD300LB and CD300C2. Interacts with CD300E. Interacts (via ITAM domain) with SYK (via SH2 domains); activates SYK mediating neutrophil and macrophage integrin-mediated activation. Interacts (via transmembrane domain) with KLRK1 isoform 2 (via transmembrane domain); the interaction is required for KLRK1 NK cell surface expression and NK cell-mediated cytotoxicity. Interacts with KLRC2. Interacts with CD300H. Interacts with KLRD1. Interacts with KLRA4 and KLRA8. In terms of processing, tyrosine phosphorylated. Following ligand binding by associated receptors, tyrosine phosphorylated in the ITAM domain which leads to activation of additional tyrosine kinases and subsequent cell activation. Expressed on microglia (at protein level). Expressed on oligodendrocytes (at protein level). Expressed on macrophages and osteoclasts. Expressed on dendritic cells in liver, spleen, kidney and lung with highest levels in liver dendritic cells.

It localises to the cell membrane. Adapter protein which non-covalently associates with activating receptors found on the surface of a variety of immune cells to mediate signaling and cell activation following ligand binding by the receptors. TYROBP is tyrosine-phosphorylated in the ITAM domain following ligand binding by the associated receptors which leads to activation of additional tyrosine kinases and subsequent cell activation. Also has an inhibitory role in some cells. Non-covalently associates with activating receptors of the CD300 family to mediate cell activation. Also mediates cell activation through association with activating receptors of the CD200R family. Required for neutrophil activation mediated by integrin. Required for the activation of myeloid cells mediated by the CLEC5A/MDL1 receptor. Associates with natural killer (NK) cell receptors such as the KLRD1/KLRC2 heterodimer to mediate NK cell activation. Also associates non-covalently with the NK cell receptors KLRA4/LY49D and KLRA8/LY49H which leads to NK cell activation. Associates with TREM1 to mediate activation of neutrophils and monocytes. Associates with TREM2 on monocyte-derived dendritic cells to mediate up-regulation of chemokine receptor CCR7 and dendritic cell maturation and survival. Association with TREM2 mediates cytokine-induced formation of multinucleated giant cells which are formed by the fusion of macrophages. Stabilizes the TREM2 C-terminal fragment (TREM2-CTF) which is produced by TREM2 ectodomain shedding. In microglia, required with TREM2 for phagocytosis of apoptotic neurons. Required with ITGAM/CD11B in microglia to control production of microglial superoxide ions which promote the neuronal apoptosis that occurs during brain development. Promotes pro-inflammatory responses in microglia following nerve injury which accelerates degeneration of injured neurons. Positively regulates the expression of the IRAK3/IRAK-M kinase and IL10 production by liver dendritic cells and inhibits their T cell allostimulatory ability. Negatively regulates B cell proliferation. Required for CSF1-mediated osteoclast cytoskeletal organization. Positively regulates multinucleation during osteoclast development. In Mus musculus (Mouse), this protein is TYRO protein tyrosine kinase-binding protein.